Here is a 354-residue protein sequence, read N- to C-terminus: Type II methylase M.HgiDII (354 aa).

Positions 3–344 (GAVIDLFCGV…KSIKRFLEGL (342 aa)) constitute an SAM-dependent MTase C5-type domain. Cys79 is an active-site residue.

This sequence belongs to the class I-like SAM-binding methyltransferase superfamily. C5-methyltransferase family.

It carries out the reaction a 2'-deoxycytidine in DNA + S-adenosyl-L-methionine = a 5-methyl-2'-deoxycytidine in DNA + S-adenosyl-L-homocysteine + H(+). Functionally, a methylase that recognizes the double-stranded sequence 5'-GTCGAC-3', methylates C-? on both strands and protects the DNA from cleavage by the HgiDII endonuclease. This Herpetosiphon aurantiacus (Herpetosiphon giganteus) protein is Type II methylase M.HgiDII.